The following is a 103-amino-acid chain: Large ribosomal subunit protein bL21 (103 aa).

It belongs to the bacterial ribosomal protein bL21 family. As to quaternary structure, part of the 50S ribosomal subunit. Contacts protein L20.

In terms of biological role, this protein binds to 23S rRNA in the presence of protein L20. The chain is Large ribosomal subunit protein bL21 from Chloroflexus aurantiacus (strain ATCC 29364 / DSM 637 / Y-400-fl).